Consider the following 204-residue polypeptide: ATP-dependent Clp protease proteolytic subunit (204 aa).

The Nucleophile role is filled by S101. Residue H126 is part of the active site.

It belongs to the peptidase S14 family. Fourteen ClpP subunits assemble into 2 heptameric rings which stack back to back to give a disk-like structure with a central cavity, resembling the structure of eukaryotic proteasomes.

It is found in the cytoplasm. The catalysed reaction is Hydrolysis of proteins to small peptides in the presence of ATP and magnesium. alpha-casein is the usual test substrate. In the absence of ATP, only oligopeptides shorter than five residues are hydrolyzed (such as succinyl-Leu-Tyr-|-NHMec, and Leu-Tyr-Leu-|-Tyr-Trp, in which cleavage of the -Tyr-|-Leu- and -Tyr-|-Trp bonds also occurs).. Cleaves peptides in various proteins in a process that requires ATP hydrolysis. Has a chymotrypsin-like activity. Plays a major role in the degradation of misfolded proteins. The protein is ATP-dependent Clp protease proteolytic subunit of Deinococcus radiodurans (strain ATCC 13939 / DSM 20539 / JCM 16871 / CCUG 27074 / LMG 4051 / NBRC 15346 / NCIMB 9279 / VKM B-1422 / R1).